We begin with the raw amino-acid sequence, 226 residues long: Phosphoglycolate phosphatase (226 aa).

Catalysis depends on Asp8, which acts as the Nucleophile. The Mg(2+) site is built by Asp8 and Asp10. Lys152 provides a ligand contact to substrate. Mg(2+) contacts are provided by Asp175 and Asp179.

This sequence belongs to the archaeal SPP-like hydrolase family. Requires Mg(2+) as cofactor.

The enzyme catalyses 2-phosphoglycolate + H2O = glycolate + phosphate. In terms of biological role, catalyzes the dephosphorylation of 2-phosphoglycolate. The protein is Phosphoglycolate phosphatase of Natronomonas pharaonis (strain ATCC 35678 / DSM 2160 / CIP 103997 / JCM 8858 / NBRC 14720 / NCIMB 2260 / Gabara) (Halobacterium pharaonis).